A 418-amino-acid chain; its full sequence is FXa-directed anticoagulant (418 aa).

The first 19 residues, 1-19 (MNLKIAIIVICQLVYFTQG), serve as a signal peptide directing secretion. N-linked (GlcNAc...) asparagine glycosylation is found at Asn117, Asn167, and Asn286.

It belongs to the serpin family. As to quaternary structure, interacts with host coagulation factor X/F10 (activated). As to expression, female salivary gland (at protein level).

The protein resides in the secreted. Its function is as follows. Anticoagulant and antithrombotic serpin-type protein inhibiting host coagulation factor Xa (F10). Does not inhibit host uPA/urokinase-type plasminogen activator (PLAU), kallikrein, granzyme B (GZMB), matriptase, elastase, alpha-chymotrypsin, chymase, coagulation factor XIIa (F12), coagulation factor XIa (F11), plasmin (PLG), thrombin (F2), trypsin and cathepsin G (CTSG). Inhibits factor Xa-induced production of pro-inflammatory cytokines, such as MCP-1/CCL2, TNF-alpha/TNF, IL-1beta/IL1B, IL6, IL8/CXCL8 and IL18, in human endothelial cells. Inhibits factor Xa-induced up-regulation of protease-activated receptors (PARs) F2R, F2RL1 and F2RL2 in human endothelial cells. Prevents activation of host F2RL1 via inhibition of F2RL1 cleavage by host factor Xa. Inhibits factor Xa-induced up-regulation of adhesion molecules ICAM1 and VCAM1 in human endothelial cells. Inhibits factor Xa-induced up-regulation of phosphorylated ERK1/2 in human endothelial cells. Inhibits factor Xa-induced activation of transcription factor NF-kappa-B in human endothelial cells. Reduces factor Xa-induced edema in the host. Reduces factor Xa-induced endothelial permeability in the host. In Aedes albopictus (Asian tiger mosquito), this protein is FXa-directed anticoagulant.